The following is a 214-amino-acid chain: Coiled-coil domain-containing protein 169 (214 aa).

Residues 29 to 154 (DAVQLSIFEL…NERRTYLAEM (126 aa)) adopt a coiled-coil conformation. Positions 155 to 170 (SQGSGLHQVSKRQQVD) are enriched in polar residues. The segment at 155-214 (SQGSGLHQVSKRQQVDQLPRMQENLVKTGRYNPAKQKTVSAKRGPVKKITRPNHLPELHP) is disordered.

The protein belongs to the CCDC169 family.

This is Coiled-coil domain-containing protein 169 (CCDC169) from Homo sapiens (Human).